Consider the following 91-residue polypeptide: Large ribosomal subunit protein bL27 (91 aa).

Residues 1–21 (MAHKKAGGSSRNGRDSESKRL) form a disordered region.

This sequence belongs to the bacterial ribosomal protein bL27 family.

This is Large ribosomal subunit protein bL27 from Azoarcus sp. (strain BH72).